Here is a 159-residue protein sequence, read N- to C-terminus: V-type proton ATPase 16 kDa proteolipid subunit c (159 aa).

Topologically, residues 1–12 (MSSEVSSDNPIY) are lumenal. Residues 13–35 (GPFFGVMGAASAIIFSALGAAYG) form a helical membrane-spanning segment. Residues 36-57 (TAKSGTGIAAMSVMRPELIMKS) are Cytoplasmic-facing. The chain crosses the membrane as a helical span at residues 58-78 (IIPVVMAGIIAIYGLVVAVLI). Over 79–96 (AGALEEPSKYSLYRGFIH) the chain is Lumenal. A helical membrane pass occupies residues 97 to 118 (LGAGLAVGFSGLAAGFAIGIVG). The Cytoplasmic portion of the chain corresponds to 119–130 (DAGVRGTAQQPR). The chain crosses the membrane as a helical span at residues 131–156 (LFVGMILILIFAEVLGLYGLIVAIYL). The Lumenal portion of the chain corresponds to 157 to 159 (YTK).

The protein belongs to the V-ATPase proteolipid subunit family. V-ATPase is a heteromultimeric enzyme made up of two complexes: the ATP-hydrolytic V1 complex and the proton translocation V0 complex. The V1 complex consists of three catalytic AB heterodimers that form a heterohexamer, three peripheral stalks each consisting of EG heterodimers, one central rotor including subunits D and F, and the regulatory subunits C and H. The proton translocation complex V0 consists of the proton transport subunit a, a ring of proteolipid subunits c9c'', rotary subunit d, subunits e and f, and the accessory subunits VhaAC45 and ATP6AP2. As to expression, expressed in the larval middle mid-gut; predominantly in the copper cell region with lower levels of expression in the interstitial cells.

The protein localises to the membrane. Its function is as follows. Proton-conducting pore forming subunit of the V0 complex of vacuolar(H+)-ATPase (V-ATPase), a multisubunit enzyme composed of a peripheral complex (V1) that hydrolyzes ATP and a membrane integral complex (V0) that translocates protons. V-ATPase is responsible for acidifying and maintaining the pH of intracellular compartments and in some cell types, is targeted to the plasma membrane, where it is responsible for acidifying the extracellular environment. In enterocytes, acts as part of a pHCl-2 sensory pathway which mediates Tor-dependent larval growth and metabolism in response to zinc availability. Likely acts in maintaining enterocyte lysosomal acidification which consequently promotes Tor activation at the lysosome membrane. This chain is V-type proton ATPase 16 kDa proteolipid subunit c (Vha16-1), found in Drosophila melanogaster (Fruit fly).